We begin with the raw amino-acid sequence, 46 residues long: uncharacterized protein (46 aa).

A helical transmembrane segment spans residues 20–42; the sequence is MAMIWVVAALVIALVVGTALNYI.

It is found in the membrane. This is an uncharacterized protein from Bacillus subtilis (strain 168).